The chain runs to 159 residues: uncharacterized protein (159 aa).

The next 4 helical transmembrane spans lie at 22–42, 45–65, 80–100, and 104–124; these read LFSS…SFTI, PIEY…LLTL, IWVS…SLSL, and FPSL…CLAF.

The protein localises to the membrane. This is an uncharacterized protein from Schizosaccharomyces pombe (strain 972 / ATCC 24843) (Fission yeast).